The sequence spans 1035 residues: Cell-division control histidine kinase PdhS (1035 aa).

Residues Met-1–Asp-613 are important for polar localization. The tract at residues Gln-500 to Glu-533 is disordered. An interaction with DivK region spans residues Ala-614–Asp-1035. Residues His-659–Val-730 form the PAS domain. Residues Arg-802–Arg-1031 enclose the Histidine kinase domain. His-805 is modified (phosphohistidine; by autocatalysis).

As to quaternary structure, interacts with DivK.

The protein resides in the cytoplasm. It carries out the reaction ATP + protein L-histidine = ADP + protein N-phospho-L-histidine.. In terms of biological role, functions as a polar differentiation marker. Essential protein that, by localizing in the old pole of dividing cells, controls cell division and maturation, probably through control of DivK phosphorylation status and cellular distribution, which in turn regulates CtrA, a transcriptional regulator of the minB operon. The asymmetrical localization of this protein is probably required for cells to enter a new division cycle. The protein is Cell-division control histidine kinase PdhS (pdhS) of Brucella canis (strain ATCC 23365 / NCTC 10854 / RM-666).